We begin with the raw amino-acid sequence, 160 residues long: Transcription elongation factor GreA 2 (160 aa).

Residues 9 to 73 (MTEEGKVKLE…RIKTVEHMLQ (65 aa)) are a coiled coil.

This sequence belongs to the GreA/GreB family.

Functionally, necessary for efficient RNA polymerase transcription elongation past template-encoded arresting sites. The arresting sites in DNA have the property of trapping a certain fraction of elongating RNA polymerases that pass through, resulting in locked ternary complexes. Cleavage of the nascent transcript by cleavage factors such as GreA or GreB allows the resumption of elongation from the new 3'terminus. GreA releases sequences of 2 to 3 nucleotides. The sequence is that of Transcription elongation factor GreA 2 from Lactiplantibacillus plantarum (strain ATCC BAA-793 / NCIMB 8826 / WCFS1) (Lactobacillus plantarum).